Here is a 159-residue protein sequence, read N- to C-terminus: S-ribosylhomocysteine lyase 1 (159 aa).

Residues H54, H58, and C124 each coordinate Fe cation.

Belongs to the LuxS family. Homodimer. It depends on Fe cation as a cofactor.

The enzyme catalyses S-(5-deoxy-D-ribos-5-yl)-L-homocysteine = (S)-4,5-dihydroxypentane-2,3-dione + L-homocysteine. Its function is as follows. Involved in the synthesis of autoinducer 2 (AI-2) which is secreted by bacteria and is used to communicate both the cell density and the metabolic potential of the environment. The regulation of gene expression in response to changes in cell density is called quorum sensing. Catalyzes the transformation of S-ribosylhomocysteine (RHC) to homocysteine (HC) and 4,5-dihydroxy-2,3-pentadione (DPD). The sequence is that of S-ribosylhomocysteine lyase 1 from Lactobacillus delbrueckii subsp. bulgaricus (strain ATCC BAA-365 / Lb-18).